Here is a 308-residue protein sequence, read N- to C-terminus: Very-long-chain enoyl-CoA reductase (308 aa).

Over 1 to 86 the chain is Cytoplasmic; that stretch reads MKHYEVEIRD…YFRDLGAQIS (86 aa). Residue lysine 22 is modified to N6-acetyllysine. Serine 58 is subject to Phosphoserine. The residue at position 60 (lysine 60) is an N6-acetyllysine. A helical transmembrane segment spans residues 87 to 106; sequence WVTVFLTEYAGPLFIYLLFY. At 107-124 the chain is on the lumenal side; the sequence is FRVPFIYGRKYDFTSSRH. Residues 125–147 form a helical membrane-spanning segment; it reads TVVHLACMCHSFHYIKRLLETLF. Residues 148–158 lie on the Cytoplasmic side of the membrane; the sequence is VHRFSHGTMPL. A helical transmembrane segment spans residues 159-180; the sequence is RNIFKNCTYYWGFAAWMAYYIN. Residues 181–189 are Lumenal-facing; the sequence is HPLYTPPTY. The chain crosses the membrane as a helical span at residues 190–216; it reads GVQQVKLALAIFVICQLGNFSIHMALR. Over 217–245 the chain is Cytoplasmic; the sequence is DLRPAGSKTRKIPYPTKNPFTWLFLLVSC. The helical transmembrane segment at 246 to 262 threads the bilayer; it reads PNYTYEVGSWIGFAIMT. Residues 263-264 are Lumenal-facing; the sequence is QC. A helical transmembrane segment spans residues 265–292; that stretch reads VPVALFSLVGFTQMTIWAKGKHRSYLKE. The Cytoplasmic segment spans residues 293 to 308; sequence FRDYPPLRMPIIPFLL.

This sequence belongs to the steroid 5-alpha reductase family. Interacts with ELOVL1 and LASS2. In terms of processing, glycosylated. Expressed at high levels in brain and is also found at lower levels in several other tissues.

The protein localises to the endoplasmic reticulum membrane. It catalyses the reaction a very-long-chain 2,3-saturated fatty acyl-CoA + NADP(+) = a very-long-chain (2E)-enoyl-CoA + NADPH + H(+). The enzyme catalyses octadecanoyl-CoA + NADP(+) = (2E)-octadecenoyl-CoA + NADPH + H(+). The catalysed reaction is (2E,7Z,10Z,13Z,16Z)-docosapentaenoyl-CoA + NADPH + H(+) = (7Z,10Z,13Z,16Z)-docosatetraenoyl-CoA + NADP(+). It carries out the reaction (2E,7Z,10Z,13Z,16Z,19Z)-docosahexaenoyl-CoA + NADPH + H(+) = (7Z,10Z,13Z,16Z,19Z)-docosapentaenoyl-CoA + NADP(+). It catalyses the reaction (2E,8Z,11Z,14Z)-eicosatetraenoyl-CoA + NADPH + H(+) = (8Z,11Z,14Z)-eicosatrienoyl-CoA + NADP(+). The enzyme catalyses (2E)-hexadecenoyl-CoA + NADPH + H(+) = hexadecanoyl-CoA + NADP(+). The protein operates within lipid metabolism; fatty acid biosynthesis. It participates in lipid metabolism; sphingolipid metabolism. Involved in both the production of very long-chain fatty acids for sphingolipid synthesis and the degradation of the sphingosine moiety in sphingolipids through the sphingosine 1-phosphate metabolic pathway. Catalyzes the last of the four reactions of the long-chain fatty acids elongation cycle. This endoplasmic reticulum-bound enzymatic process, allows the addition of 2 carbons to the chain of long- and very long-chain fatty acids/VLCFAs per cycle. This enzyme reduces the trans-2,3-enoyl-CoA fatty acid intermediate to an acyl-CoA that can be further elongated by entering a new cycle of elongation. Thereby, it participates in the production of VLCFAs of different chain lengths that are involved in multiple biological processes as precursors of membrane lipids and lipid mediators. Catalyzes the saturation step of the sphingosine 1-phosphate metabolic pathway, the conversion of trans-2-hexadecenoyl-CoA to palmitoyl-CoA. This Rattus norvegicus (Rat) protein is Very-long-chain enoyl-CoA reductase (Tecr).